Reading from the N-terminus, the 64-residue chain is Translational regulator CsrA (64 aa).

Belongs to the CsrA/RsmA family. In terms of assembly, homodimer; the beta-strands of each monomer intercalate to form a hydrophobic core, while the alpha-helices form wings that extend away from the core.

Its subcellular location is the cytoplasm. Functionally, a key translational regulator that binds mRNA to regulate translation initiation and/or mRNA stability. Mediates global changes in gene expression, shifting from rapid growth to stress survival by linking envelope stress, the stringent response and the catabolite repression systems. Usually binds in the 5'-UTR; binding at or near the Shine-Dalgarno sequence prevents ribosome-binding, repressing translation, binding elsewhere in the 5'-UTR can activate translation and/or stabilize the mRNA. Its function is antagonized by small RNA(s). This is Translational regulator CsrA from Methylococcus capsulatus (strain ATCC 33009 / NCIMB 11132 / Bath).